The sequence spans 406 residues: Multifunctional CCA protein (406 aa).

Residues Gly-8 and Arg-11 each coordinate ATP. Positions 8 and 11 each coordinate CTP. The Mg(2+) site is built by Glu-21 and Asp-23. Positions 91, 137, and 140 each coordinate ATP. 3 residues coordinate CTP: Arg-91, Arg-137, and Arg-140. The HD domain maps to Thr-225–Phe-326.

This sequence belongs to the tRNA nucleotidyltransferase/poly(A) polymerase family. Bacterial CCA-adding enzyme type 1 subfamily. Monomer. Can also form homodimers and oligomers. Requires Mg(2+) as cofactor. Ni(2+) serves as cofactor.

The enzyme catalyses a tRNA precursor + 2 CTP + ATP = a tRNA with a 3' CCA end + 3 diphosphate. It catalyses the reaction a tRNA with a 3' CCA end + 2 CTP + ATP = a tRNA with a 3' CCACCA end + 3 diphosphate. Its function is as follows. Catalyzes the addition and repair of the essential 3'-terminal CCA sequence in tRNAs without using a nucleic acid template. Adds these three nucleotides in the order of C, C, and A to the tRNA nucleotide-73, using CTP and ATP as substrates and producing inorganic pyrophosphate. tRNA 3'-terminal CCA addition is required both for tRNA processing and repair. Also involved in tRNA surveillance by mediating tandem CCA addition to generate a CCACCA at the 3' terminus of unstable tRNAs. While stable tRNAs receive only 3'-terminal CCA, unstable tRNAs are marked with CCACCA and rapidly degraded. The chain is Multifunctional CCA protein from Nitrosococcus oceani (strain ATCC 19707 / BCRC 17464 / JCM 30415 / NCIMB 11848 / C-107).